Here is a 543-residue protein sequence, read N- to C-terminus: Probable bifunctional tRNA threonylcarbamoyladenosine biosynthesis protein (543 aa).

The tract at residues 1–329 is kae1; sequence MDISKDLICI…YRSDMVEVNW (329 aa). Positions 112, 116, and 133 each coordinate Fe cation. Residues 133 to 137, aspartate 165, glycine 178, glutamate 182, and asparagine 262 contribute to the L-threonylcarbamoyladenylate site; that span reads YVSGG. Aspartate 290 serves as a coordination point for Fe cation. Residues 342–543 form the Protein kinase domain; that stretch reads IIPEHLIGKG…KEVEKRARYL (202 aa). Residues 348–356 and lysine 369 contribute to the ATP site; that span reads IGKGAEADI. The active-site Proton acceptor; for kinase activity is the aspartate 461.

This sequence in the N-terminal section; belongs to the KAE1 / TsaD family. In the C-terminal section; belongs to the protein kinase superfamily. Tyr protein kinase family. BUD32 subfamily. As to quaternary structure, component of the KEOPS complex that consists of Kae1, Bud32, Cgi121 and Pcc1; the whole complex dimerizes. Fe(2+) serves as cofactor.

It localises to the cytoplasm. It carries out the reaction L-seryl-[protein] + ATP = O-phospho-L-seryl-[protein] + ADP + H(+). The catalysed reaction is L-threonyl-[protein] + ATP = O-phospho-L-threonyl-[protein] + ADP + H(+). The enzyme catalyses L-threonylcarbamoyladenylate + adenosine(37) in tRNA = N(6)-L-threonylcarbamoyladenosine(37) in tRNA + AMP + H(+). In terms of biological role, required for the formation of a threonylcarbamoyl group on adenosine at position 37 (t(6)A37) in tRNAs that read codons beginning with adenine. Is a component of the KEOPS complex that is probably involved in the transfer of the threonylcarbamoyl moiety of threonylcarbamoyl-AMP (TC-AMP) to the N6 group of A37. The Kae1 domain likely plays a direct catalytic role in this reaction. The Bud32 domain probably displays kinase activity that regulates Kae1 function. This chain is Probable bifunctional tRNA threonylcarbamoyladenosine biosynthesis protein, found in Methanococcus maripaludis (strain C6 / ATCC BAA-1332).